A 22-amino-acid chain; its full sequence is MICOS complex subunit MIC60 (22 aa).

The protein belongs to the MICOS complex subunit Mic60 family. In terms of assembly, component of the mitochondrial contact site and cristae organizing system (MICOS) complex, composed of at least MICOS10/MIC10, CHCHD3/MIC19, CHCHD6/MIC25, APOOL/MIC27, IMMT/MIC60, APOO/MIC23/MIC26 and MICOS13/MIC13. This complex was also known under the names MINOS or MitOS complex. The MICOS complex associates with mitochondrial outer membrane proteins SAMM50, MTX1 and MTX2 (together described as components of the mitochondrial outer membrane sorting assembly machinery (SAM) complex) and DNAJC11, mitochondrial inner membrane protein TMEM11 and with HSPA9. The MICOS and SAM complexes together with DNAJC11 are part of a large protein complex spanning both membranes termed the mitochondrial intermembrane space bridging (MIB) complex. Interacts with HSPA1A/HSPA1B and OPA1, preferentially with the soluble OPA1 form. Interacts with MICOS13/MIC13, MICOS10/MIC10, CHCHD3/MIC19, CHCHD6/MIC25, SAMM50 and TMEM11. Interacts with APOO/MIC23/MIC26 and APOOL/MIC27. Interacts with ARMC1. Interacts with ARMC12.

The protein localises to the mitochondrion inner membrane. It is found in the mitochondrion. Component of the MICOS complex, a large protein complex of the mitochondrial inner membrane that plays crucial roles in the maintenance of crista junctions, inner membrane architecture, and formation of contact sites to the outer membrane. Plays an important role in the maintenance of the MICOS complex stability and the mitochondrial cristae morphology. This Mesocricetus auratus (Golden hamster) protein is MICOS complex subunit MIC60.